A 382-amino-acid polypeptide reads, in one-letter code: Small ribosomal subunit protein bS1 homolog (382 aa).

4 S1 motif domains span residues 16-84, 102-167, 188-256, and 273-342; these read GDVV…LSKR, KEVF…LSHR, GSVL…LSIK, and GDVL…LSMR. Serine 243 is modified (phosphoserine).

It belongs to the bacterial ribosomal protein bS1 family.

Plays a role in sporulation. Cannot be expressed in wild-type E.coli, does not complement an E.coli rpsA deletion. This chain is Small ribosomal subunit protein bS1 homolog, found in Bacillus subtilis (strain 168).